Here is a 362-residue protein sequence, read N- to C-terminus: Probable S-adenosylmethionine-dependent methyltransferase At5g37990 (362 aa).

Tyrosine 19, cysteine 66, asparagine 71, aspartate 107, serine 136, and phenylalanine 137 together coordinate S-adenosyl-L-homocysteine. Mg(2+) is bound by residues asparagine 175, glutamate 261, and phenylalanine 263.

Belongs to the methyltransferase superfamily. Type-7 methyltransferase family. In terms of assembly, homodimer. Mg(2+) serves as cofactor.

The polypeptide is Probable S-adenosylmethionine-dependent methyltransferase At5g37990 (Arabidopsis thaliana (Mouse-ear cress)).